We begin with the raw amino-acid sequence, 211 residues long: Molybdenum cofactor guanylyltransferase (211 aa).

Residues Leu-12–Gly-14, Lys-25, Asn-53, Asp-71, and Asp-101 each bind GTP. Residue Asp-101 participates in Mg(2+) binding.

Belongs to the MobA family. In terms of assembly, monomer. Requires Mg(2+) as cofactor.

It localises to the cytoplasm. The enzyme catalyses Mo-molybdopterin + GTP + H(+) = Mo-molybdopterin guanine dinucleotide + diphosphate. Functionally, transfers a GMP moiety from GTP to Mo-molybdopterin (Mo-MPT) cofactor (Moco or molybdenum cofactor) to form Mo-molybdopterin guanine dinucleotide (Mo-MGD) cofactor. This is Molybdenum cofactor guanylyltransferase from Acidovorax sp. (strain JS42).